The following is an 889-amino-acid chain: MLTQEDFRNKYQYHQATPMLQQYLDIKFTHQCCILLFRVGDFYELFFDDAIVVSKLLGLVLAKKGKHAGQDLPMCGIPYHALESYLPRLVEQEHKVALCEQLESPEEAKKRNGYKAVVKREVVRILTSGTITEESLIKANAPNYLAAIVIYKDIASIGYCDVSTAEFIVIDVSIHNLTSELSRINPKEIILSESLQHNSSLLALFDNYKQKIVYQVESYFSFNKAQRTIQNYYEIITIDSIGSLNSTQVSVVGAILEYLSIVQKHSKSKLPFPQIVSYENFMLIDASARKNLELTSTLSGNLKGSLLSVIDATVTNQGGRLLHKFLSTPLAEVNLINSRLQITDFFYQNLQLVENLRELVKLVPDIERALSRILIAKALPKDLESIKISLKIALSIKKELNKVLEEENIPKYLEEIYNPLFGDDELYDLLDSALLDDLSNSANDGGFIKSSYSTKLEELRNLIYNSSHFIEQLKLQYRQETCIETLKICHNNVWGMFIEVSSKNAHKITDSKFVHKQTTTTAVRFTTTELQTLEAKMLNAKTMAAALEQEILAELCKAISLKSEKLSHLAKSISLIDVFCNFAYISHEFNYCRPEITSDLAFNIVNGRHTVIEKLITKKHESFISNDCNLQNDQRIWLITGPNMAGKSTFLRQNAIIVILAQIGCYVPAQSAQIGVVDKLFSRIGAADDLASGQSTFMVEMVETSVILAQSTFRSLVILDEIGRGTSTYDGISIAWSCLEYIHSNIRCRCLFATHYHELVDLASKLQSLKNFTVKIHDSNDKLSFLYKIIEGAANKSYGIHVAELAGLPRIVLNRAKEILLELEHNKADINQSNNNITKSMDIAVPPYPVKTIEIIKQLNPDQLTPKEALSIIYKIKNTILLEEDEKMI.

641-648 provides a ligand contact to ATP; that stretch reads GPNMAGKS.

This sequence belongs to the DNA mismatch repair MutS family.

Its function is as follows. This protein is involved in the repair of mismatches in DNA. It is possible that it carries out the mismatch recognition step. This protein has a weak ATPase activity. The sequence is that of DNA mismatch repair protein MutS from Orientia tsutsugamushi (strain Ikeda) (Rickettsia tsutsugamushi).